The following is a 315-amino-acid chain: Protoheme IX farnesyltransferase (315 aa).

Transmembrane regions (helical) follow at residues 32 to 52, 53 to 73, 93 to 113, 120 to 140, 153 to 173, 180 to 200, 226 to 246, 249 to 269, and 295 to 315; these read VMSL…GHMN, PVLA…SGAL, IPAG…LSAF, LMVN…YAVI, IVIG…AATG, LVLF…LSLF, ALFY…MGFA, FYGV…WRLW, and IFAV…FGVF.

Belongs to the UbiA prenyltransferase family. Protoheme IX farnesyltransferase subfamily.

Its subcellular location is the cell inner membrane. It catalyses the reaction heme b + (2E,6E)-farnesyl diphosphate + H2O = Fe(II)-heme o + diphosphate. The protein operates within porphyrin-containing compound metabolism; heme O biosynthesis; heme O from protoheme: step 1/1. Its function is as follows. Converts heme B (protoheme IX) to heme O by substitution of the vinyl group on carbon 2 of heme B porphyrin ring with a hydroxyethyl farnesyl side group. This Brucella canis (strain ATCC 23365 / NCTC 10854 / RM-666) protein is Protoheme IX farnesyltransferase.